The sequence spans 262 residues: Fibroin light chain (262 aa).

A signal peptide spans 1-16 (MKPIFLVLLVATSAYA). S19 bears the N-acetylserine; in short form mark. A disulfide bridge links C101 with C160.

Silk fibroin elementary unit consists in a disulfide-linked heavy and light chain and a p25 glycoprotein in molar ratios of 6:6:1. This results in a complex of approximately 2.3 MDa. The interchain disulfide bridge is essential for the intracellular transport and secretion of fibroin. In terms of processing, partially N-terminally processed to yield a short form which lacks the first two residues of the long form. In terms of tissue distribution, produced exclusively in the posterior (PSG) section of silk glands, which are essentially modified salivary glands.

It localises to the secreted. Its function is as follows. It is likely that the major role of L-chain is to prevent the retention of H-chain in ER by forming the disulfide linkage. The chain is Fibroin light chain (FIBL) from Bombyx mori (Silk moth).